A 126-amino-acid polypeptide reads, in one-letter code: UPF0344 protein ABC2900 (126 aa).

4 helical membrane passes run Ala-16–Phe-36, Ala-43–Ala-63, Leu-66–Ile-86, and Gly-104–Ile-124.

The protein belongs to the UPF0344 family.

It is found in the cell membrane. This is UPF0344 protein ABC2900 from Shouchella clausii (strain KSM-K16) (Alkalihalobacillus clausii).